The following is a 288-amino-acid chain: tRNA dimethylallyltransferase (288 aa).

17–24 (GPTASGKT) contacts ATP. Residue 19–24 (TASGKT) participates in substrate binding.

It belongs to the IPP transferase family. Monomer. It depends on Mg(2+) as a cofactor.

The enzyme catalyses adenosine(37) in tRNA + dimethylallyl diphosphate = N(6)-dimethylallyladenosine(37) in tRNA + diphosphate. Catalyzes the transfer of a dimethylallyl group onto the adenine at position 37 in tRNAs that read codons beginning with uridine, leading to the formation of N6-(dimethylallyl)adenosine (i(6)A). This Jannaschia sp. (strain CCS1) protein is tRNA dimethylallyltransferase.